We begin with the raw amino-acid sequence, 440 residues long: Aspartokinase (440 aa).

This sequence belongs to the aspartokinase family.

The enzyme catalyses L-aspartate + ATP = 4-phospho-L-aspartate + ADP. It participates in amino-acid biosynthesis; L-lysine biosynthesis via DAP pathway; (S)-tetrahydrodipicolinate from L-aspartate: step 1/4. Its pathway is amino-acid biosynthesis; L-methionine biosynthesis via de novo pathway; L-homoserine from L-aspartate: step 1/3. It functions in the pathway amino-acid biosynthesis; L-threonine biosynthesis; L-threonine from L-aspartate: step 1/5. The chain is Aspartokinase (lysC) from Chlamydia pneumoniae (Chlamydophila pneumoniae).